A 346-amino-acid chain; its full sequence is Fe(3+) ions import ATP-binding protein FbpC 2 (346 aa).

The region spanning 5–235 (LEVDGVDKSF…PVDVPTAEFI (231 aa)) is the ABC transporter domain. 37–44 (GPSGCGKT) provides a ligand contact to ATP.

This sequence belongs to the ABC transporter superfamily. Fe(3+) ion importer (TC 3.A.1.10) family. As to quaternary structure, the complex is composed of two ATP-binding proteins (FbpC), two transmembrane proteins (FbpB) and a solute-binding protein (FbpA).

The protein resides in the cell membrane. The enzyme catalyses Fe(3+)(out) + ATP + H2O = Fe(3+)(in) + ADP + phosphate + H(+). In terms of biological role, part of the ABC transporter complex FbpABC involved in Fe(3+) ions import. Responsible for energy coupling to the transport system. The protein is Fe(3+) ions import ATP-binding protein FbpC 2 of Rhodococcus jostii (strain RHA1).